The primary structure comprises 527 residues: Serine/threonine-protein kinase CHK1 (527 aa).

Residues 15-281 (VVLGDTVGQG…LKALKLHPWV (267 aa)) enclose the Protein kinase domain. Residues 21–29 (VGQGAFACV) and Lys-45 each bind ATP. Catalysis depends on Asp-142, which acts as the Proton acceptor.

Belongs to the protein kinase superfamily. CAMK Ser/Thr protein kinase family. NIM1 subfamily.

Its subcellular location is the nucleus. It catalyses the reaction L-seryl-[protein] + ATP = O-phospho-L-seryl-[protein] + ADP + H(+). The enzyme catalyses L-threonyl-[protein] + ATP = O-phospho-L-threonyl-[protein] + ADP + H(+). In terms of biological role, serine/threonine-protein kinase which is required for checkpoint-mediated cell cycle arrest and activation of DNA repair in response to the presence of DNA damage or unreplicated DNA. May also negatively regulate cell cycle progression during unperturbed cell cycles. Controls phosphorylation and abundance of PDS1 to prevent anaphase entry. Also helps prevent mitotic exit. This is Serine/threonine-protein kinase CHK1 (CHK1) from Saccharomyces cerevisiae (strain ATCC 204508 / S288c) (Baker's yeast).